Reading from the N-terminus, the 330-residue chain is Diacylglycerol acyltransferase/mycolyltransferase Ag85B (330 aa).

The N-terminal stretch at 1 to 40 (MTDLSEKVRAWGRRLVVGAAAAATLPGLIGIAGGAATANA) is a signal peptide. 82–83 (LR) provides a ligand contact to substrate. A fibronectin-binding region spans residues 98–108 (FEWYYQSGLSV). Residues cysteine 127 and cysteine 132 are joined by a disulfide bond. Residues serine 166 and aspartate 194 each contribute to the substrate site. Serine 166 (nucleophile) is an active-site residue. Glutamate 270 is a catalytic residue. Substrate-binding positions include 272-275 (FVRS), lysine 279, and 302-304 (HSW). Histidine 302 is a catalytic residue.

It belongs to the mycobacterial A85 antigen family.

It is found in the secreted. It carries out the reaction 2 alpha,alpha'-trehalose 6-mycolate = alpha,alpha'-trehalose 6,6'-bismycolate + alpha,alpha-trehalose. The enzyme catalyses an acyl-CoA + a 1,2-diacyl-sn-glycerol = a triacyl-sn-glycerol + CoA. In terms of biological role, the antigen 85 proteins (FbpA, FbpB, FbpC) are responsible for the high affinity of mycobacteria for fibronectin, a large adhesive glycoprotein, which facilitates the attachment of M.tuberculosis to murine alveolar macrophages (AMs). They also help to maintain the integrity of the cell wall by catalyzing the transfer of mycolic acids to cell wall arabinogalactan and through the synthesis of alpha,alpha-trehalose dimycolate (TDM, cord factor). They catalyze the transfer of a mycoloyl residue from one molecule of alpha,alpha-trehalose monomycolate (TMM) to another TMM, leading to the formation of TDM. The sequence is that of Diacylglycerol acyltransferase/mycolyltransferase Ag85B (fbpB) from Mycobacterium intracellulare (strain ATCC 13950 / DSM 43223 / JCM 6384 / NCTC 13025 / 3600).